Consider the following 213-residue polypeptide: Small ribosomal subunit protein uS3 (213 aa).

The region spanning 38-106 (IRSYIKKLLY…EFSLEVTEVR (69 aa)) is the KH type-2 domain.

It belongs to the universal ribosomal protein uS3 family. As to quaternary structure, part of the 30S ribosomal subunit. Forms a tight complex with proteins S10 and S14.

In terms of biological role, binds the lower part of the 30S subunit head. Binds mRNA in the 70S ribosome, positioning it for translation. The sequence is that of Small ribosomal subunit protein uS3 from Lawsonia intracellularis (strain PHE/MN1-00).